The primary structure comprises 312 residues: MAEIYLAGGCFWGLEEYFSRISGVLETSVGYANGQVETTNYQLLKETDHAETVQVIYDEKEVSLREILLYYFRVIDPLSINQQGNDRGRQYRTGIYYQDEADLPAIYTVVQEQERMLGRKIAVEVEQLRHYILAEDYHQDYLRKNPSGYCHIDVTDADKPLIDAANYEKPSQEVLKASLSEESYRVTQEAATEAPFTNAYDQTFEEGIYVDITTGEPLFFAKDKFASGCGWPSFSRPISKELIHYYKDLSHGMERIEVRSRSGSAHLGHVFTDGPRELGGLRYCINSASLRFVAKDEMEKAGYGYLLPYLNK.

Residues 1-155 (MAEIYLAGGC…PSGYCHIDVT (155 aa)) are peptide methionine sulfoxide reductase. Cys10 is a catalytic residue. One can recognise a MsrB domain in the interval 172-295 (QEVLKASLSE…NSASLRFVAK (124 aa)). Catalysis depends on Cys284, which acts as the Nucleophile.

It in the N-terminal section; belongs to the MsrA Met sulfoxide reductase family. This sequence in the C-terminal section; belongs to the MsrB Met sulfoxide reductase family.

Its subcellular location is the cell membrane. It catalyses the reaction L-methionyl-[protein] + [thioredoxin]-disulfide + H2O = L-methionyl-(S)-S-oxide-[protein] + [thioredoxin]-dithiol. The enzyme catalyses [thioredoxin]-disulfide + L-methionine + H2O = L-methionine (S)-S-oxide + [thioredoxin]-dithiol. The catalysed reaction is L-methionyl-[protein] + [thioredoxin]-disulfide + H2O = L-methionyl-(R)-S-oxide-[protein] + [thioredoxin]-dithiol. Functionally, has an important function as a repair enzyme for proteins that have been inactivated by oxidation. Catalyzes the reversible oxidation-reduction of methionine sulfoxide in proteins to methionine. This Streptococcus pneumoniae serotype 4 (strain ATCC BAA-334 / TIGR4) protein is Peptide methionine sulfoxide reductase MsrA/MsrB 1 (msrAB1).